We begin with the raw amino-acid sequence, 322 residues long: Cysteine protease yopT1 (322 aa).

Residues C139, H258, and D274 contribute to the active site.

This sequence belongs to the peptidase C58 family. Interacts with human ARHA.

It localises to the secreted. Its function is as follows. Cysteine protease, which is translocated into infected cells and plays a central role in pathogenesis by cleaving the C-terminus end of the human small GTPase RhoA/ARHA, a regulator of cytoskeleton. Once cleaved, ARHA loses its lipid modification, and is released from the cell membrane, leading to the subsequent disruption of actin cytoskeleton of the host cell. This is Cysteine protease yopT1 (yopT1) from Yersinia enterocolitica.